The following is a 259-amino-acid chain: Major cell-binding factor (259 aa).

The first 26 residues, 1 to 26, serve as a signal peptide directing secretion; sequence MVFRKSLLKLAVFALGACVAFSNANA.

The protein belongs to the bacterial solute-binding protein 3 family.

It is found in the cell surface. In terms of biological role, common antigen and a major cell adherence molecule. Most probably involved, with PEB1C, in a binding-protein-dependent transport system for an amino acid. May be involved in binding to intestinal cells. The chain is Major cell-binding factor (peb1A) from Campylobacter jejuni subsp. jejuni serotype O:23/36 (strain 81-176).